The primary structure comprises 251 residues: Putative integrase/recombinase y4eF (251 aa).

Positions 1–40 (MLGREDIRTYQVYLANEKKLAPGSIHIALSALRFFFNVTL) constitute a Core-binding (CB) domain. The region spanning 58 to 231 (KLPIILSPDE…ATNKVCATES (174 aa)) is the Tyr recombinase domain. Catalysis depends on residues arginine 93, lysine 118, histidine 183, arginine 186, and histidine 209. Residue tyrosine 218 is the O-(3'-phospho-DNA)-tyrosine intermediate of the active site.

This sequence belongs to the 'phage' integrase family.

This is Putative integrase/recombinase y4eF from Sinorhizobium fredii (strain NBRC 101917 / NGR234).